A 200-amino-acid polypeptide reads, in one-letter code: 3-isopropylmalate dehydratase small subunit (200 aa).

This sequence belongs to the LeuD family. LeuD type 1 subfamily. Heterodimer of LeuC and LeuD.

The enzyme catalyses (2R,3S)-3-isopropylmalate = (2S)-2-isopropylmalate. It functions in the pathway amino-acid biosynthesis; L-leucine biosynthesis; L-leucine from 3-methyl-2-oxobutanoate: step 2/4. Functionally, catalyzes the isomerization between 2-isopropylmalate and 3-isopropylmalate, via the formation of 2-isopropylmaleate. The protein is 3-isopropylmalate dehydratase small subunit of Campylobacter jejuni subsp. doylei (strain ATCC BAA-1458 / RM4099 / 269.97).